We begin with the raw amino-acid sequence, 299 residues long: HTH-type transcriptional regulator CysL (299 aa).

The HTH lysR-type domain maps to 1–58; sequence MYYDVLKTFIAVVEEKNFTKAAEKLMISQPSVSLHIKNLEKEFQTALLNRSPKHFTTT. Residues 18 to 37 constitute a DNA-binding region (H-T-H motif); sequence FTKAAEKLMISQPSVSLHIK.

Belongs to the LysR transcriptional regulatory family.

In terms of biological role, transcriptional activator of the cysJI operon which is involved in sulfur assimilation. Also negatively regulates its own transcription. This chain is HTH-type transcriptional regulator CysL (cysL), found in Bacillus subtilis (strain 168).